A 141-amino-acid chain; its full sequence is MQLTSFTDYGLRALIYMASLPDGQMTSISQVTEVYGVSRNHMVKIINQLSRVGLVTAVRGKNGGIRLGKPADQILIGDVVRQMEPLTLVNCSSDFCHITPACRLKQVLNQAVQSFLKELDNYTLADMVKDNSPLYKLLLVE.

The HTH rrf2-type domain maps to 2 to 129 (QLTSFTDYGL…DNYTLADMVK (128 aa)). The H-T-H motif DNA-binding region spans 28–51 (ISQVTEVYGVSRNHMVKIINQLSR). Residues C91, C96, and C102 each contribute to the [2Fe-2S] cluster site.

[2Fe-2S] cluster is required as a cofactor.

In terms of biological role, nitric oxide-sensitive repressor of genes involved in protecting the cell against nitrosative stress. May require iron for activity. The polypeptide is HTH-type transcriptional repressor NsrR (Yersinia pseudotuberculosis serotype O:1b (strain IP 31758)).